A 402-amino-acid polypeptide reads, in one-letter code: MSRRLFTSESVTEGHPDKIADQISDTILDALLREDPTSRVAVETLITTGLVHVAGEVTTKAYADIANLVRGKILEIGYDSSKKGFDGASCGVSVSIGAQSPDIAQGVDTAYENRVEGDEDELDRQGAGDQGLMFGYASDETPTLMPLPVFLAHRLSKRLSEVRKNGTIPYLRPDGKTQVTIEYDGDKAVRLDTVVVSSQHASDIDLESLLAPDIKEFVVEPELKALLEDGIKIDTENYRLLVNPTGRFEIGGPMGDAGLTGRKIIIDTYGGMARHGGGAFSGKDPSKVDRSAAYAMRWVAKNVVAAGLAARCEVQVAYAIGKAEPVGLFVETFGTAKVDTEKIEKAIDEVFDLRPAAIIRALDLLRPIYAQTAAYGHFGRELPDFTWERTDRVDALREAAGL.

His15 serves as a coordination point for ATP. Asp17 is a binding site for Mg(2+). Residue Glu43 coordinates K(+). Positions 56 and 99 each coordinate L-methionine. The tract at residues 99–109 is flexible loop; it reads QSPDIAQGVDT. Residues 174–176, 247–248, Asp256, 262–263, Ala279, and Lys283 contribute to the ATP site; these read DGK, RF, and RK. L-methionine is bound at residue Asp256. Lys287 lines the L-methionine pocket.

It belongs to the AdoMet synthase family. Homotetramer; dimer of dimers. It depends on Mg(2+) as a cofactor. Requires K(+) as cofactor.

It is found in the cytoplasm. The enzyme catalyses L-methionine + ATP + H2O = S-adenosyl-L-methionine + phosphate + diphosphate. It participates in amino-acid biosynthesis; S-adenosyl-L-methionine biosynthesis; S-adenosyl-L-methionine from L-methionine: step 1/1. Functionally, catalyzes the formation of S-adenosylmethionine (AdoMet) from methionine and ATP. The overall synthetic reaction is composed of two sequential steps, AdoMet formation and the subsequent tripolyphosphate hydrolysis which occurs prior to release of AdoMet from the enzyme. The protein is S-adenosylmethionine synthase of Streptomyces coelicolor (strain ATCC BAA-471 / A3(2) / M145).